The primary structure comprises 464 residues: Cysteine--tRNA ligase (464 aa).

Cys27 lines the Zn(2+) pocket. A 'HIGH' region motif is present at residues 29–39; it reads PTVYNYFHIGN. Zn(2+) contacts are provided by Cys207, His232, and Glu236. A 'KMSKS' region motif is present at residues 264 to 268; that stretch reads KMSKS. ATP is bound at residue Lys267.

It belongs to the class-I aminoacyl-tRNA synthetase family. Monomer. The cofactor is Zn(2+).

The protein localises to the cytoplasm. The enzyme catalyses tRNA(Cys) + L-cysteine + ATP = L-cysteinyl-tRNA(Cys) + AMP + diphosphate. This chain is Cysteine--tRNA ligase, found in Alkaliphilus oremlandii (strain OhILAs) (Clostridium oremlandii (strain OhILAs)).